Reading from the N-terminus, the 6919-residue chain is Nonribosomal peptide synthetase easA (6919 aa).

Residues 17 to 93 (TNNEVVEKDI…ELCQSVKLAE (77 aa)) enclose the Carrier 1 domain. Ser54 carries the post-translational modification O-(pantetheine 4'-phosphoryl)serine. The interval 123–427 (EAQKLYASTK…FLRKVKDTRM (305 aa)) is epimerization 1. Residues 294 to 319 (FRRSTPVESTNDERNTNERQHNRHQN) are disordered. Residues 304 to 319 (NDERNTNERQHNRHQN) are compositionally biased toward basic and acidic residues. A condensation 1 region spans residues 604-981 (LNVELDCGRL…ISTTQEINQL (378 aa)). The adenylation 1 stretch occupies residues 1003 to 1394 (QRLRRPDAWA…GRRDTQIKVR (392 aa)). Residues 1531-1608 (EPETLLERQV…QLAQTAEVKD (78 aa)) enclose the Carrier 2 domain. An O-(pantetheine 4'-phosphoryl)serine modification is found at Ser1569. The epimerization 2 stretch occupies residues 1617-2031 (LLSPMQKWYF…ANAISALGTE (415 aa)). Residues 2072–2509 (VEDIYPCSPI…VGQLNTVTPK (438 aa)) form a condensation 2 region. Residues 2541–2930 (RPNATAVCAW…ARKDSQVKVR (390 aa)) form an adenylation 2 region. Positions 3067 to 3143 (APSTFMEKKL…EMAAHLEAQM (77 aa)) constitute a Carrier 3 domain. Residue Ser3104 is modified to O-(pantetheine 4'-phosphoryl)serine. The condensation 3 stretch occupies residues 3188-3599 (EDVYPCTPLQ…LLSKDEARRL (412 aa)). An adenylation 3 region spans residues 3620-4018 (QHVSTNPYAP…GRRDGQVKIR (399 aa)). The 78-residue stretch at 4151-4228 (TPSTSEEKNI…QLAKKAVIKT (78 aa)) folds into the Carrier 4 domain. Position 4188 is an O-(pantetheine 4'-phosphoryl)serine (Ser4188). The tract at residues 4282 to 4708 (ESIYYCSPIQ…EIDVIPTGDV (427 aa)) is condensation 4. The adenylation 4 stretch occupies residues 4732-5133 (EQALSQPGAQ…GRADGQIKIR (402 aa)). In terms of domain architecture, Carrier 5 spans 5260–5337 (ALSTETERRL…DMANTIANSE (78 aa)). At Ser5296 the chain carries O-(pantetheine 4'-phosphoryl)serine. The interval 5380–5775 (EDAYPCTPLQ…VFGQLQSAAN (396 aa)) is condensation 5. Residues 5824–6216 (SCPDAQAVHA…IGRRDTQVKI (393 aa)) form an adenylation 5 region. In terms of domain architecture, Carrier 6 spans 6344–6421 (EPATVTERLL…DMATLIDRKT (78 aa)). Ser6381 is subject to O-(pantetheine 4'-phosphoryl)serine.

It participates in antibiotic biosynthesis. Nonribosomal peptide synthetase; part of the gene cluster that mediates the biosynthesis of emericellamides, secondary metabolites acting as antibiotics. The biosynthesis of emericellamides initiates from the highly reducing polyketide synthase easB which catalyzes the formation of the linear polyketide chain. EasB produces several polyketides that can be further processed by the downstream enzymes. The polyketides are released from easB as linear polyketide carboxylic acids, which are converted to CoA thioesters by the acyl-CoA ligase easD. The substrates are then loaded onto the acyltransferase easC, which shuttles them to the first thiolation (T) domain of the nonribosomal peptide synthetase easA. EasA then performs condensation of the polyketides with one glycine, two alanine, one valine and one leucine residues. A last step of cyclization leads to the production of emericellamides. In Emericella nidulans (strain FGSC A4 / ATCC 38163 / CBS 112.46 / NRRL 194 / M139) (Aspergillus nidulans), this protein is Nonribosomal peptide synthetase easA.